Here is a 1451-residue protein sequence, read N- to C-terminus: Glutamate receptor ionotropic, NMDA 2A (1451 aa).

The signal sequence occupies residues 1-20; sequence MGMFVLLLYTFLYAGDLGHG. Residues 21–547 lie on the Extracellular side of the membrane; that stretch reads AEKSFPVLNI…PSAFLEPFSA (527 aa). Asn67 carries an N-linked (GlcNAc...) asparagine glycan. A disulfide bridge links Cys79 with Cys312. Residues His120, Asp258, and Asp274 each coordinate Zn(2+). N-linked (GlcNAc...) asparagine glycosylation is found at Asn332, Asn372, Asn435, and Asn436. 2 disulfide bridges follow: Cys421/Cys447 and Cys428/Cys448. L-glutamate contacts are provided by Ser503, Thr505, and Arg510. A glycan (N-linked (GlcNAc...) asparagine) is linked at Asn533. A helical transmembrane segment spans residues 548–568; the sequence is SVWVMMFVMLLLVSAMAVFIF. Residues 569-592 lie on the Cytoplasmic side of the membrane; it reads EYFSPVGYNRNLAQGKDPHGPSFT. Residues 591–612 form a pore-forming region; that stretch reads FTIGKAVWLLWGLVFNNSVPVQ. Positions 593–612 form an intramembrane region, discontinuously helical; sequence IGKAVWLLWGLVFNNSVPVQ. The Cytoplasmic portion of the chain corresponds to 613-617; the sequence is NPKGT. The helical transmembrane segment at 618 to 637 threads the bilayer; it reads TSKIIVSIWAFFAVIFLASY. The Extracellular segment spans residues 638–808; the sequence is TANLAAFMIQ…VMSSQLDIDN (171 aa). Asn679 carries N-linked (GlcNAc...) asparagine glycosylation. Residues Ser681, Thr682, and Asp723 each coordinate L-glutamate. A disulfide bridge connects residues Cys737 and Cys792. The helical transmembrane segment at 809 to 829 threads the bilayer; the sequence is MAGVFYMLAAAMALSLITFVW. Residues 830–1451 are Cytoplasmic-facing; sequence EHLFYWKLRF…KKMPSLESDV (622 aa). A compositionally biased stretch (polar residues) spans 1011–1022; it reads TLRQTQGSVNEN. Disordered stretches follow at residues 1011 to 1080 and 1100 to 1165; these read TLRQ…VSAK and NRDK…GRLP. 3 stretches are compositionally biased toward basic and acidic residues: residues 1055-1073, 1100-1113, and 1138-1149; these read CHID…DNLK, NRDK…DKEP, and YQDHNDNYRKTE.

Belongs to the glutamate-gated ion channel (TC 1.A.10.1) family. Heterotetramer. Forms heterotetrameric channels composed of two GluN1/zeta subunits (GRIN1), and two identical GluN2/epsilon subunits (GRIN2A, GRIN2B, GRIN2C or GRIN2D) or GluN3 subunits (GRIN3A or GRIN3B) (in vitro). In vivo, the subunit composition may depend on the expression levels of the different subunits.

It is found in the cell membrane. The protein resides in the postsynaptic cell membrane. The enzyme catalyses Ca(2+)(in) = Ca(2+)(out). It carries out the reaction Na(+)(in) = Na(+)(out). The catalysed reaction is K(+)(in) = K(+)(out). In terms of biological role, component of N-methyl-D-aspartate (NMDA) receptors (NMDARs) that function as heterotetrameric, ligand-gated cation channels with high calcium permeability and voltage-dependent block by Mg(2+). MDARs participate in synaptic plasticity. Channel activation requires binding of the neurotransmitter L-glutamate to the GluN2 subunit, glycine binding to the GluN1 subunit, plus membrane depolarization to eliminate channel inhibition by Mg(2+). NMDARs mediate simultaneously the potasium efflux and the influx of calcium and sodium. Each GluN2 subunit confers differential attributes to channel properties, including activation, deactivation and desensitization kinetics, pH sensitivity, Ca2(+) permeability, and binding to allosteric modulators. Plays a role in dendritic branching in brain neurons and in synaptic plasticity. This chain is Glutamate receptor ionotropic, NMDA 2A, found in Xenopus laevis (African clawed frog).